The chain runs to 227 residues: Prolactin (227 aa).

The first 28 residues, 1–28 (MNIKGSPWKGSLLLLLVSNLLLCQSVAP), serve as a signal peptide directing secretion. Residues Cys-32 and Cys-39 are joined by a disulfide bond. Ser-54 carries the post-translational modification Phosphoserine. An N-linked (GlcNAc...) asparagine; partial glycan is attached at Asn-59. Phosphoserine occurs at positions 62, 118, 163, and 194. 2 disulfide bridges follow: Cys-86-Cys-202 and Cys-219-Cys-227.

The protein belongs to the somatotropin/prolactin family. In terms of assembly, interacts with PRLR.

The protein resides in the secreted. Its function is as follows. Prolactin acts primarily on the mammary gland by promoting lactation. In Homo sapiens (Human), this protein is Prolactin (PRL).